Reading from the N-terminus, the 320-residue chain is Reticulocalbin-2 (320 aa).

A signal peptide spans 1–25 (MRLGPRPAALGLLLPLLLYAAVAGA). 2 EF-hand domains span residues 64–99 (EQQR…SFKH) and 100–135 (YAMQ…RVID). The Ca(2+) site is built by aspartate 77, aspartate 79, aspartate 81, glutamate 88, aspartate 113, asparagine 115, aspartate 117, and glutamate 124. Threonine 140 is modified (phosphothreonine). EF-hand domains lie at 150–185 (FRQL…HPEE), 189–224 (MTEF…DPTA), 230–265 (WILV…NNQG), and 266–301 (IAQE…FLTS). Ca(2+)-binding residues include aspartate 167, glutamate 176, aspartate 202, asparagine 204, aspartate 206, glutamate 213, aspartate 243, aspartate 245, aspartate 247, arginine 249, glutamate 254, aspartate 279, asparagine 281, aspartate 283, lysine 285, and glutamate 290. Residues 317–320 (HDEL) carry the Prevents secretion from ER motif.

The protein belongs to the CREC family.

It localises to the endoplasmic reticulum lumen. Its function is as follows. Not known. Binds calcium. The sequence is that of Reticulocalbin-2 (Rcn2) from Mus musculus (Mouse).